A 313-amino-acid polypeptide reads, in one-letter code: Homoserine O-succinyltransferase (313 aa).

C142 acts as the Acyl-thioester intermediate in catalysis. Substrate-binding residues include K163 and S192. H235 serves as the catalytic Proton acceptor. Residue E237 is part of the active site. R249 is a binding site for substrate.

Belongs to the MetA family.

The protein localises to the cytoplasm. It catalyses the reaction L-homoserine + succinyl-CoA = O-succinyl-L-homoserine + CoA. It functions in the pathway amino-acid biosynthesis; L-methionine biosynthesis via de novo pathway; O-succinyl-L-homoserine from L-homoserine: step 1/1. Its function is as follows. Transfers a succinyl group from succinyl-CoA to L-homoserine, forming succinyl-L-homoserine. The polypeptide is Homoserine O-succinyltransferase (Vibrio campbellii (strain ATCC BAA-1116)).